The chain runs to 451 residues: 3-phosphoshikimate 1-carboxyvinyltransferase (451 aa).

3-phosphoshikimate-binding residues include Lys30, Ser31, and Arg35. Lys30 is a binding site for phosphoenolpyruvate. The phosphoenolpyruvate site is built by Gly101 and Arg130. Residues Ser176, Ser177, Gln178, Asp321, and Lys348 each coordinate 3-phosphoshikimate. Gln178 provides a ligand contact to phosphoenolpyruvate. Asp321 serves as the catalytic Proton acceptor. Positions 352 and 422 each coordinate phosphoenolpyruvate.

This sequence belongs to the EPSP synthase family. Monomer.

The protein resides in the cytoplasm. The enzyme catalyses 3-phosphoshikimate + phosphoenolpyruvate = 5-O-(1-carboxyvinyl)-3-phosphoshikimate + phosphate. It participates in metabolic intermediate biosynthesis; chorismate biosynthesis; chorismate from D-erythrose 4-phosphate and phosphoenolpyruvate: step 6/7. Catalyzes the transfer of the enolpyruvyl moiety of phosphoenolpyruvate (PEP) to the 5-hydroxyl of shikimate-3-phosphate (S3P) to produce enolpyruvyl shikimate-3-phosphate and inorganic phosphate. The polypeptide is 3-phosphoshikimate 1-carboxyvinyltransferase (Burkholderia pseudomallei (strain K96243)).